Here is a 729-residue protein sequence, read N- to C-terminus: Probable tape measure protein (729 aa).

A coiled-coil region spans residues 9–35 (IMGDADQLSETLDQASEEVSAFGEQAK).

It belongs to the P2likevirus tape measure protein family.

Functionally, serves as a base for tail tube protein polymerization and acts as a template for tail length determination. This chain is Probable tape measure protein, found in Streptomyces phage phiC31 (Bacteriophage phi-C31).